Reading from the N-terminus, the 501-residue chain is Pyruvate dehydrogenase protein X component, mitochondrial (501 aa).

Residues 1–53 constitute a mitochondrion transit peptide; sequence MAASWRLHCNQPLLRYLLGFSSRRSLGLAQGAAAWPVDRGASWRWFHSTQLLQ. One can recognise a Lipoyl-binding domain in the interval 56-132; the sequence is PIKVLMPSLS…QLGSLIALMV (77 aa). Lysine 97 is subject to N6-lipoyllysine. A disordered region spans residues 145-176; the sequence is KDVSAPPPVSKPPAPTQPSPQPQIPCPARKEH. Residues 149-169 are compositionally biased toward pro residues; sequence APPPVSKPPAPTQPSPQPQIP. The Peripheral subunit-binding (PSBD) domain occupies 183–220; sequence RLSPAARNILEKHSLDASQGTATGPRGIFTKEDALKLV. At lysine 194 the chain carries N6-acetyllysine. Serine 196 is modified (phosphoserine). Residues 228-256 form a disordered region; that stretch reads ITESRPASAPPPSLSASVPPQATAGPSYP. Lysine 394 bears the N6-succinyllysine mark.

It belongs to the 2-oxoacid dehydrogenase family. In terms of assembly, part of the inner core of the multimeric pyruvate dehydrogenase complex that is composed of about 48 DLAT and 12 PDHX molecules. This core binds multiple copies of pyruvate dehydrogenase (subunits PDH1A and PDHB, E1), dihydrolipoamide acetyltransferase (DLAT, E2) and lipoamide dehydrogenase (DLD, E3). Interacts with SIRT4. Interacts with DLD. Post-translationally, delipoylated at Lys-97 by SIRT4, delipoylation decreases the PHD complex activity.

It localises to the mitochondrion matrix. Required for anchoring dihydrolipoamide dehydrogenase (E3) to the dihydrolipoamide transacetylase (E2) core of the pyruvate dehydrogenase complexes of eukaryotes. This specific binding is essential for a functional PDH complex. The chain is Pyruvate dehydrogenase protein X component, mitochondrial (Pdhx) from Mus musculus (Mouse).